The following is a 181-amino-acid chain: Protein AC41 (181 aa).

Functionally, plays a role in late gene expression. This is Protein AC41 (AC41) from Autographa californica nuclear polyhedrosis virus (AcMNPV).